We begin with the raw amino-acid sequence, 484 residues long: uncharacterized protein (484 aa).

Residues Val14–Ser82 enclose the HTH gntR-type domain. A DNA-binding region (H-T-H motif) is located at residues Gln42–Asp61. N6-(pyridoxal phosphate)lysine is present on Lys327.

In the C-terminal section; belongs to the class-I pyridoxal-phosphate-dependent aminotransferase family. The cofactor is pyridoxal 5'-phosphate.

This is an uncharacterized protein from Bacillus subtilis (strain 168).